Reading from the N-terminus, the 458-residue chain is Histidine--tRNA ligase (458 aa).

Belongs to the class-II aminoacyl-tRNA synthetase family. Homodimer.

Its subcellular location is the cytoplasm. The enzyme catalyses tRNA(His) + L-histidine + ATP = L-histidyl-tRNA(His) + AMP + diphosphate + H(+). The protein is Histidine--tRNA ligase of Azobacteroides pseudotrichonymphae genomovar. CFP2.